The following is a 191-amino-acid chain: uncharacterized protein (191 aa).

In terms of domain architecture, HTH tetR-type spans 3 to 63; the sequence is IDRKKLILEA…EIFTTLLKEM (61 aa). The segment at residues 26 to 45 is a DNA-binding region (H-T-H motif); it reads TMDLVAKLANVGKGTIYTFF.

This is an uncharacterized protein from Bacillus subtilis (strain 168).